The chain runs to 759 residues: NADP-dependent malic enzyme (759 aa).

The tract at residues 1–428 (MDDQLKQSAL…KLTEFVYKTN (428 aa)) is malic enzyme. Residue Y39 is the Proton donor of the active site. K56 is modified (N6-acetyllysine). The Proton acceptor role is filled by K94. E136, D137, and D162 together coordinate a divalent metal cation. Residues 195–198 (AGAA), N288, and N320 contribute to the NADP(+) site. A phosphate acetyltransferase; required for oligomerization, inhibition by acetyl-CoA and activation by glutamate, aspartate, and glucose-6-phosphate region spans residues 429 to 759 (LFMKPIFSQA…AVVEAQTQPL (331 aa)).

This sequence in the N-terminal section; belongs to the malic enzymes family. In the C-terminal section; belongs to the phosphate acetyltransferase and butyryltransferase family. As to quaternary structure, homooligomer, possibly an octamer. Mg(2+) serves as cofactor. The cofactor is Mn(2+).

The catalysed reaction is (S)-malate + NADP(+) = pyruvate + CO2 + NADPH. The enzyme catalyses oxaloacetate + H(+) = pyruvate + CO2. Its activity is regulated as follows. Inhibited by 4 mM Mg(2+) and acetyl-CoA, competitively inhibited by fumarate and oxaloacetate. Activated by glutamate and aspartate, glucose-6-phosphate, acetyl-phosphate and 2 mM KCl. Catalyzes the decarboxylation of malate to pyruvate. In vitro, shows malolactic enzyme activity in the presence of NADPH. However, it is unlikely that this activity is of relevance in E.coli, which produces little NADPH. This is NADP-dependent malic enzyme (maeB) from Escherichia coli (strain K12).